The following is a 698-amino-acid chain: Elongation factor G (698 aa).

The tr-type G domain maps to 10-285 (AGTRNIGIMA…AVVDFLPNPL (276 aa)). GTP contacts are provided by residues 19–26 (AHIDAGKT), 83–87 (DTPGH), and 137–140 (NKMD).

The protein belongs to the TRAFAC class translation factor GTPase superfamily. Classic translation factor GTPase family. EF-G/EF-2 subfamily.

The protein resides in the cytoplasm. Functionally, catalyzes the GTP-dependent ribosomal translocation step during translation elongation. During this step, the ribosome changes from the pre-translocational (PRE) to the post-translocational (POST) state as the newly formed A-site-bound peptidyl-tRNA and P-site-bound deacylated tRNA move to the P and E sites, respectively. Catalyzes the coordinated movement of the two tRNA molecules, the mRNA and conformational changes in the ribosome. The polypeptide is Elongation factor G (Frankia casuarinae (strain DSM 45818 / CECT 9043 / HFP020203 / CcI3)).